A 280-amino-acid polypeptide reads, in one-letter code: Probable endonuclease 4 (280 aa).

His68, His108, Glu143, Asp177, His180, His214, Asp227, His229, and Glu259 together coordinate Zn(2+).

It belongs to the AP endonuclease 2 family. Zn(2+) serves as cofactor.

It catalyses the reaction Endonucleolytic cleavage to 5'-phosphooligonucleotide end-products.. Functionally, endonuclease IV plays a role in DNA repair. It cleaves phosphodiester bonds at apurinic or apyrimidinic (AP) sites, generating a 3'-hydroxyl group and a 5'-terminal sugar phosphate. This is Probable endonuclease 4 from Cenarchaeum symbiosum (strain A).